We begin with the raw amino-acid sequence, 90 residues long: Small ribosomal subunit protein bS20 (90 aa).

The disordered stretch occupies residues 1–27; it reads MANSAQAKKRARQNEKRELHNASQRSA.

This sequence belongs to the bacterial ribosomal protein bS20 family.

Binds directly to 16S ribosomal RNA. The polypeptide is Small ribosomal subunit protein bS20 (Coxiella burnetii (strain CbuK_Q154) (Coxiella burnetii (strain Q154))).